Reading from the N-terminus, the 30-residue chain is Trypsin inhibitor 3 (30 aa).

Disulfide bonds link Cys4–Cys21, Cys11–Cys23, and Cys17–Cys29.

The protein belongs to the protease inhibitor I7 (squash-type serine protease inhibitor) family.

The protein localises to the secreted. Inhibits lysyl endopeptidase and trypsin. This chain is Trypsin inhibitor 3, found in Cucumis melo var. conomon (Oriental pickling melon).